A 365-amino-acid polypeptide reads, in one-letter code: Isoflavone 4'-O-methyltransferase (365 aa).

S-adenosyl-L-methionine contacts are provided by residues 207–210 (VAGG), aspartate 231, 231–232 (DQ), 251–252 (DM), and lysine 265. The active-site Proton acceptor is histidine 269.

This sequence belongs to the class I-like SAM-binding methyltransferase superfamily. Cation-independent O-methyltransferase family. COMT subfamily.

The catalysed reaction is a 4'-hydroxyisoflavone + S-adenosyl-L-methionine = a 4'-methoxyisoflavone + S-adenosyl-L-homocysteine + H(+). The enzyme catalyses (2R,3S)-2,4',7-trihydroxyisoflavanone + S-adenosyl-L-methionine = (2R,3S)-2,7-dihydroxy-4'-methoxyisoflavanone + S-adenosyl-L-homocysteine + H(+). Functionally, 2-hydroxyisoflavanone 4'-O-methyltransferase involved in the biosynthesis of formononetin. Can use 2,7,4'-trihydroxyisoflavanone as substrate, but not daidzein. The sequence is that of Isoflavone 4'-O-methyltransferase (HI4'OMT) from Lotus japonicus (Lotus corniculatus var. japonicus).